Consider the following 126-residue polypeptide: MYLSILAVGIGGALGSLFRWFLGLRLNALFPALPLGTLASNVIAGYIIGAAVAYFGRNPQIAPEWRLFIITGLMGGLSTFSTFSAEVVQHLQQGRLNWAAGEIAIHVTASVIATVLGITTVAVVTR.

Transmembrane regions (helical) follow at residues 3 to 23 (LSIL…WFLG), 35 to 55 (LGTL…VAYF), 68 to 88 (FIIT…AEVV), and 103 to 123 (IAIH…TVAV). Residues Gly-75 and Ser-78 each coordinate Na(+).

The protein belongs to the fluoride channel Fluc/FEX (TC 1.A.43) family.

Its subcellular location is the cell inner membrane. The enzyme catalyses fluoride(in) = fluoride(out). Na(+) is not transported, but it plays an essential structural role and its presence is essential for fluoride channel function. In terms of biological role, fluoride-specific ion channel. Important for reducing fluoride concentration in the cell, thus reducing its toxicity. This chain is Fluoride-specific ion channel FluC, found in Paraburkholderia phymatum (strain DSM 17167 / CIP 108236 / LMG 21445 / STM815) (Burkholderia phymatum).